The chain runs to 164 residues: Small ribosomal subunit protein uS5 (164 aa).

The 64-residue stretch at 10 to 73 folds into the S5 DRBM domain; the sequence is IEERVVAINR…ESAKKNMIEV (64 aa).

It belongs to the universal ribosomal protein uS5 family. As to quaternary structure, part of the 30S ribosomal subunit. Contacts proteins S4 and S8.

With S4 and S12 plays an important role in translational accuracy. Its function is as follows. Located at the back of the 30S subunit body where it stabilizes the conformation of the head with respect to the body. The protein is Small ribosomal subunit protein uS5 of Streptococcus suis (strain 98HAH33).